The primary structure comprises 313 residues: Porphobilinogen deaminase (313 aa).

Cysteine 242 is subject to S-(dipyrrolylmethanemethyl)cysteine.

The protein belongs to the HMBS family. As to quaternary structure, monomer. The cofactor is dipyrromethane.

It carries out the reaction 4 porphobilinogen + H2O = hydroxymethylbilane + 4 NH4(+). The protein operates within porphyrin-containing compound metabolism; protoporphyrin-IX biosynthesis; coproporphyrinogen-III from 5-aminolevulinate: step 2/4. Tetrapolymerization of the monopyrrole PBG into the hydroxymethylbilane pre-uroporphyrinogen in several discrete steps. This is Porphobilinogen deaminase from Salmonella arizonae (strain ATCC BAA-731 / CDC346-86 / RSK2980).